The sequence spans 89 residues: uncharacterized protein (89 aa).

A helical membrane pass occupies residues 28–50 (LYLDLGFSALLFYNSNLLFSFIL).

The protein resides in the membrane. This is an uncharacterized protein from Archaeoglobus fulgidus (strain ATCC 49558 / DSM 4304 / JCM 9628 / NBRC 100126 / VC-16).